A 334-amino-acid chain; its full sequence is Probable peptidoglycan endopeptidase LytE (334 aa).

An N-terminal signal peptide occupies residues 1–25 (MKKQIITATTAVVLGSTLFAGAASA). 3 LysM domains span residues 26–69 (QSIK…TLSI), 86–129 (STYK…VLKL), and 149–192 (STYK…VLKV). Disordered regions lie at residues 70–89 (NGKS…STYK), 131–153 (GSTS…TYKV), and 195–215 (TSTS…KTSS). Composition is skewed to low complexity over residues 72–87 (KSTS…SSST) and 132–153 (STSS…TYKV). Positions 217–334 (SLNVSKLVSD…KPRYLGAKRF (118 aa)) constitute a NlpC/P60 domain. The active-site Nucleophile is the C247. The active-site Proton acceptor is H296. The active site involves H308.

It belongs to the peptidase C40 family.

The protein localises to the secreted. The protein resides in the cell wall. Cell wall hydrolase that cleaves gamma-D-glutamate-meso-diaminopimelate bonds in peptidoglycan. Seems to play a role in cell separation during vegetative growth. This is Probable peptidoglycan endopeptidase LytE (lytE) from Bacillus subtilis (strain 168).